The chain runs to 1441 residues: Probable cleavage and polyadenylation specificity factor subunit 1 (1441 aa).

Belongs to the CPSF1 family. CPSF is a heterotetramer composed of four distinct subunits 160, 100, 70 and 30 kDa.

It localises to the nucleus. In terms of biological role, CPSF plays a key role in pre-mRNA 3'-end formation, recognizing the AAUAAA signal sequence and interacting with poly(A)polymerase and other factors to bring about cleavage and poly(A) addition. This subunit is involved in the RNA recognition step of the polyadenylation reaction. The chain is Probable cleavage and polyadenylation specificity factor subunit 1 from Oryza sativa subsp. japonica (Rice).